Reading from the N-terminus, the 373-residue chain is DNA replication and repair protein RecF (373 aa).

30-37 (GENAQGKT) is an ATP binding site.

The protein belongs to the RecF family.

The protein resides in the cytoplasm. Functionally, the RecF protein is involved in DNA metabolism; it is required for DNA replication and normal SOS inducibility. RecF binds preferentially to single-stranded, linear DNA. It also seems to bind ATP. The protein is DNA replication and repair protein RecF of Bacillus cytotoxicus (strain DSM 22905 / CIP 110041 / 391-98 / NVH 391-98).